The following is a 681-amino-acid chain: Auxin response factor 8 (681 aa).

The segment at residues 120–222 (FAKTLTQSDA…DLHVGIRRAK (103 aa)) is a DNA-binding region (TF-B3). 2 disordered regions span residues 474–518 (LRRP…AKPP) and 534–577 (SLSG…TSSE). Composition is skewed to polar residues over residues 534–555 (SLSG…NTEK) and 564–577 (GVIQ…TSSE). In terms of domain architecture, PB1 spans 595–675 (PGQCKVFIES…RRLTILTDAG (81 aa)).

Belongs to the ARF family. As to quaternary structure, homodimers and heterodimers. In terms of tissue distribution, expressed in roots, culms, leaves and young panicles.

The protein resides in the nucleus. Functionally, auxin response factors (ARFs) are transcriptional factors that bind specifically to the DNA sequence 5'-TGTCTC-3' found in the auxin-responsive promoter elements (AuxREs). The protein is Auxin response factor 8 (ARF8) of Oryza sativa subsp. japonica (Rice).